The following is a 424-amino-acid chain: Phosphoribosylamine--glycine ligase (424 aa).

Positions 111–312 (KAFVKECGIK…LLDLCLATAK (202 aa)) constitute an ATP-grasp domain. 137 to 189 (IQNASFPLVIKALNKNTSIVYQEEEAIKILEDAFKQSNEPVIIEPFLEGFELS) is a binding site for ATP.

This sequence belongs to the GARS family.

It carries out the reaction 5-phospho-beta-D-ribosylamine + glycine + ATP = N(1)-(5-phospho-beta-D-ribosyl)glycinamide + ADP + phosphate + H(+). It functions in the pathway purine metabolism; IMP biosynthesis via de novo pathway; N(1)-(5-phospho-D-ribosyl)glycinamide from 5-phospho-alpha-D-ribose 1-diphosphate: step 2/2. The chain is Phosphoribosylamine--glycine ligase (purD) from Helicobacter pylori (strain ATCC 700392 / 26695) (Campylobacter pylori).